The sequence spans 1319 residues: Chitin-binding domain protein cbd-1 (1319 aa).

Positions 1–19 (MGPQLATVSLLLLTFFSNS) are cleaved as a signal peptide. Chitin-binding type-2 domains follow at residues 28-83 (ATEC…ECRV), 96-141 (EFDC…TQDC), and 190-236 (DFDC…QSCD). Disulfide bonds link cysteine 61–cysteine 72, cysteine 128–cysteine 141, and cysteine 222–cysteine 235. A disordered region spans residues 250 to 271 (YSTSTITTPQEDDSEYSSTTSA). In terms of domain architecture, Chitin-binding type-2 4 spans 304-357 (PFVCQEGQVNSFGMCSSRFNRCQNNSVRSKQCPVNTLFESSLVMCVFDLPQCQP). An N-linked (GlcNAc...) asparagine glycan is attached at asparagine 327. Cysteines 335 and 348 form a disulfide. Residues 504–524 (KNRHSKKQLGPHEDPDGYDDE) form a disordered region. The segment covering 513 to 524 (GPHEDPDGYDDE) has biased composition (basic and acidic residues). Residues 566–614 (NKDCQQYTTPTFLTFGDCFDQFIFCSGNGINRMAACPIGETFDKTLRSC) enclose the Chitin-binding type-2 5 domain. A disulfide bridge links cysteine 601 with cysteine 614. The interval 649-682 (VTTQSTWNDQPSTTQAPNSYESYTTQYSSNDVPS) is disordered. Chitin-binding type-2 domains follow at residues 689 to 745 (GDRC…ECGS), 782 to 838 (GDRC…KCQT), and 883 to 942 (VDTC…ACDE). Cysteine 721 and cysteine 734 are joined by a disulfide. Residues 742–764 (ECGSQGSTSSPVITTPGQDQSSN) form a disordered region. The span at 745–764 (SQGSTSSPVITTPGQDQSSN) shows a compositional bias: polar residues. 2 disulfides stabilise this stretch: cysteine 814/cysteine 827 and cysteine 916/cysteine 929. The segment covering 984 to 995 (TGSTKYSTTDSG) has biased composition (polar residues). Residues 984 to 1031 (TGSTKYSTTDSGEYTIPYGDETTSTRSYDRADNDSEDEEEDDVEHDQK) form a disordered region. Asparagine 1016 is a glycosylation site (N-linked (GlcNAc...) asparagine). Positions 1017–1027 (DSEDEEEDDVE) are enriched in acidic residues. Chitin-binding type-2 domains follow at residues 1029–1081 (DQKC…GCGK), 1105–1163 (EGRC…ACTV), 1179–1237 (SAFC…GCEN), and 1242–1298 (NGEC…SCSG). 4 disulfides stabilise this stretch: cysteine 1060/cysteine 1073, cysteine 1139/cysteine 1152, cysteine 1213/cysteine 1226, and cysteine 1274/cysteine 1287. The span at 1297–1312 (SGQASDSNSSYGSSTY) shows a compositional bias: low complexity. A disordered region spans residues 1297 to 1319 (SGQASDSNSSYGSSTYNDDKSGY). N-linked (GlcNAc...) asparagine glycosylation is present at asparagine 1304.

It localises to the secreted. Its subcellular location is the extracellular space. The protein resides in the extracellular matrix. In terms of biological role, in unfertilized oocytes, maintains egg-1 and egg-2 at the plasma membrane together with chitin synthase chs-1 and kinase mbk-2. Essential for the formation of a continuous and cohesive chitin layer following fertilization. This chain is Chitin-binding domain protein cbd-1, found in Caenorhabditis elegans.